Reading from the N-terminus, the 312-residue chain is Ribosomal protein L11 methyltransferase (312 aa).

4 residues coordinate S-adenosyl-L-methionine: Thr-162, Gly-183, Asp-205, and Asn-248.

This sequence belongs to the methyltransferase superfamily. PrmA family.

It is found in the cytoplasm. It catalyses the reaction L-lysyl-[protein] + 3 S-adenosyl-L-methionine = N(6),N(6),N(6)-trimethyl-L-lysyl-[protein] + 3 S-adenosyl-L-homocysteine + 3 H(+). Functionally, methylates ribosomal protein L11. In Exiguobacterium sp. (strain ATCC BAA-1283 / AT1b), this protein is Ribosomal protein L11 methyltransferase.